Reading from the N-terminus, the 384-residue chain is Isoafricanol synthase (384 aa).

Mg(2+)-binding residues include aspartate 95, asparagine 245, serine 249, and glutamate 253.

It belongs to the terpene synthase family. The cofactor is Mg(2+).

The enzyme catalyses (2E,6E)-farnesyl diphosphate + H2O = (+)-isoafricanol + diphosphate. Catalyzes the cyclization of farnesyl diphosphate (FPP) to isoafricanol. In Streptomyces violaceusniger (strain Tu 4113), this protein is Isoafricanol synthase.